A 394-amino-acid chain; its full sequence is Probable ribosome production factor 1 (394 aa).

Disordered regions lie at residues 1 to 98 (MIKI…PVLN) and 116 to 152 (MKKE…EKDQ). 2 stretches are compositionally biased toward acidic residues: residues 15–33 (QDSD…DLEV) and 59–88 (ASED…DDDD). Residues 116–134 (MKKEKHKKKMQERRARRKA) show a composition bias toward basic residues. The 185-residue stretch at 185–369 (PKVLITFADN…LRSLQEGTFD (185 aa)) folds into the Brix domain. The interval 347-364 (VKLRELGPRFTLKLRSLQ) is RNA-binding.

It is found in the nucleus. The protein resides in the nucleolus. Functionally, may be required for ribosome biogenesis. This Drosophila melanogaster (Fruit fly) protein is Probable ribosome production factor 1.